We begin with the raw amino-acid sequence, 567 residues long: uncharacterized protein (567 aa).

6 consecutive transmembrane segments (helical) span residues 20 to 40 (FTIL…SGVL), 69 to 89 (SLET…SVFI), 95 to 115 (AYLT…VALI), 126 to 146 (ILLN…FMCL), 168 to 188 (IPLV…YLLF), and 528 to 548 (IFGS…LLAI).

The protein resides in the cell membrane. This is an uncharacterized protein from Escherichia coli (strain K12).